A 224-amino-acid polypeptide reads, in one-letter code: Urease accessory protein UreF (224 aa).

The protein belongs to the UreF family. UreD, UreF and UreG form a complex that acts as a GTP-hydrolysis-dependent molecular chaperone, activating the urease apoprotein by helping to assemble the nickel containing metallocenter of UreC. The UreE protein probably delivers the nickel.

The protein resides in the cytoplasm. Functionally, required for maturation of urease via the functional incorporation of the urease nickel metallocenter. The chain is Urease accessory protein UreF from Pseudomonas entomophila (strain L48).